Consider the following 269-residue polypeptide: Lysyl endopeptidase (269 aa).

Intrachain disulfides connect Cys6-Cys216, Cys12-Cys80, and Cys36-Cys58. Residues His57, Asp113, and Ser194 each act as charge relay system in the active site.

This sequence belongs to the peptidase S1 family.

It localises to the secreted. The catalysed reaction is Preferential cleavage: Lys-|-Xaa, including Lys-|-Pro.. Its function is as follows. Highly specific endopeptidase that hydrolyzes lysyl bonds including the Lys-Pro bond. In Lysobacter enzymogenes, this protein is Lysyl endopeptidase.